Consider the following 403-residue polypeptide: Phosphopentomutase (403 aa).

Positions 13, 298, 303, 339, 340, and 351 each coordinate Mn(2+).

The protein belongs to the phosphopentomutase family. It depends on Mn(2+) as a cofactor.

The protein localises to the cytoplasm. It carries out the reaction 2-deoxy-alpha-D-ribose 1-phosphate = 2-deoxy-D-ribose 5-phosphate. The catalysed reaction is alpha-D-ribose 1-phosphate = D-ribose 5-phosphate. The protein operates within carbohydrate degradation; 2-deoxy-D-ribose 1-phosphate degradation; D-glyceraldehyde 3-phosphate and acetaldehyde from 2-deoxy-alpha-D-ribose 1-phosphate: step 1/2. Functionally, isomerase that catalyzes the conversion of deoxy-ribose 1-phosphate (dRib-1-P) and ribose 1-phosphate (Rib-1-P) to deoxy-ribose 5-phosphate (dRib-5-P) and ribose 5-phosphate (Rib-5-P), respectively. The polypeptide is Phosphopentomutase (Streptococcus gordonii (strain Challis / ATCC 35105 / BCRC 15272 / CH1 / DL1 / V288)).